A 202-amino-acid chain; its full sequence is Protein-methionine-sulfoxide reductase heme-binding subunit MsrQ (202 aa).

The next 5 helical transmembrane spans lie at 8 to 28 (IVWL…WLFW), 82 to 102 (LWCF…ELGI), 116 to 136 (PYLT…VTST), 149 to 169 (LLHN…LWSV), and 171 to 191 (IVSP…TWRY).

This sequence belongs to the MsrQ family. Heterodimer of a catalytic subunit (MsrP) and a heme-binding subunit (MsrQ). FMN is required as a cofactor. Heme b serves as cofactor.

Its subcellular location is the cell inner membrane. Functionally, part of the MsrPQ system that repairs oxidized periplasmic proteins containing methionine sulfoxide residues (Met-O), using respiratory chain electrons. Thus protects these proteins from oxidative-stress damage caused by reactive species of oxygen and chlorine generated by the host defense mechanisms. MsrPQ is essential for the maintenance of envelope integrity under bleach stress, rescuing a wide series of structurally unrelated periplasmic proteins from methionine oxidation. MsrQ provides electrons for reduction to the reductase catalytic subunit MsrP, using the quinone pool of the respiratory chain. The protein is Protein-methionine-sulfoxide reductase heme-binding subunit MsrQ of Klebsiella pneumoniae subsp. pneumoniae (strain ATCC 700721 / MGH 78578).